A 694-amino-acid chain; its full sequence is Pentatricopeptide repeat-containing protein At3g12770 (694 aa).

PPR repeat units lie at residues 52 to 82, 83 to 117, 118 to 152, 153 to 183, 186 to 220, 221 to 255, 256 to 286, 287 to 321, 322 to 356, 357 to 387, 388 to 422, 423 to 457, and 458 to 488; these read SGFLITKLIHASSSFGDITFARQVFDDLPRP, QIFPWNAIIRGYSRNNHFQDALLMYSNMQLARVSP, DSFTFPHLLKACSGLSHLQMGRFVHAQVFRLGFDA, DVFVQNGLIALYAKCRRLGSARTVFEGLPLP, TIVSWTAIVSAYAQNGEPMEALEIFSQMRKMDVKP, DWVALVSVLNAFTCLQDLKQGRSIHASVVKMGLEI, EPDLLISLNTMYAKCGQVATAKILFDKMKSP, NLILWNAMISGYAKNGYAREAIDMFHEMINKDVRP, DTISITSAISACAQVGSLEQARSMYEYVGRSDYRD, DVFISSALIDMFAKCGSVEGARLVFDRTLDR, DVVVWSAMIVGYGLHGRAREAISLYRAMERGGVHP, NDVTFLGLLMACNHSGMVREGWWFFNRMADHKINP, and QQQHYACVIDLLGRAGHLDQAYEVIKCMPVQ. Positions 493 to 568 are type E motif; that stretch reads VWGALLSACK…DVGCSWVEVR (76 aa). The segment at 569 to 599 is type E(+) motif; that stretch reads GRLEAFRVGDKSHPRYEEIERQVEWIESRLK. A type DYW motif region spans residues 600–694; the sequence is EGGFVANKDA…DGVCSCGDYW (95 aa).

Belongs to the PPR family. PCMP-H subfamily.

The chain is Pentatricopeptide repeat-containing protein At3g12770 (PCMP-H43) from Arabidopsis thaliana (Mouse-ear cress).